The sequence spans 439 residues: Mitochondrial distribution and morphology protein 12 (439 aa).

In terms of domain architecture, SMP-LTD spans 1–439 (MSIDINWDTI…VYPSFWTFLV (439 aa)). Disordered regions lie at residues 65–165 (PLPD…PGAL) and 229–284 (LTLT…HEKS). Residues 69–90 (FYEDDEDYPDEEGDEAENEAED) are compositionally biased toward acidic residues. A compositionally biased stretch (basic and acidic residues) spans 109–121 (PSRDSQSRERGRG). The segment covering 229 to 243 (LTLTPQSHPDPTSRP) has biased composition (polar residues).

This sequence belongs to the MDM12 family. In terms of assembly, component of the ER-mitochondria encounter structure (ERMES) or MDM complex, composed of MMM1, MDM10, mdm12 and MDM34. An MMM1 homodimer associates with one molecule of mdm12 on each side in a pairwise head-to-tail manner, and the SMP-LTD domains of MMM1 and mdm12 generate a continuous hydrophobic tunnel for phospholipid trafficking.

The protein resides in the mitochondrion outer membrane. It localises to the endoplasmic reticulum membrane. Functionally, component of the ERMES/MDM complex, which serves as a molecular tether to connect the endoplasmic reticulum (ER) and mitochondria. Components of this complex are involved in the control of mitochondrial shape and protein biogenesis, and function in nonvesicular lipid trafficking between the ER and mitochondria. mdm12 is required for the interaction of the ER-resident membrane protein MMM1 and the outer mitochondrial membrane-resident beta-barrel protein MDM10. The mdm12-MMM1 subcomplex functions in the major beta-barrel assembly pathway that is responsible for biogenesis of all mitochondrial outer membrane beta-barrel proteins, and acts in a late step after the SAM complex. The MDM10-mdm12-MMM1 subcomplex further acts in the TOM40-specific pathway after the action of the mdm12-MMM1 complex. Essential for establishing and maintaining the structure of mitochondria and maintenance of mtDNA nucleoids. This is Mitochondrial distribution and morphology protein 12 from Pyrenophora tritici-repentis (strain Pt-1C-BFP) (Wheat tan spot fungus).